A 267-amino-acid polypeptide reads, in one-letter code: Distal basal body ring component protein (267 aa).

Positions 1-29 (MKAFLFAAAATLVITALSAPAFAGTPVTL) are cleaved as a signal peptide.

FlaD is a subunit of the flagellar transenvelope basal body.

It is found in the periplasm. The protein resides in the bacterial flagellum basal body. In terms of biological role, flaD might be the structural protein of the distal basal body ring P, or it is necessary for the assembly of the P ring. In Caulobacter vibrioides (strain ATCC 19089 / CIP 103742 / CB 15) (Caulobacter crescentus), this protein is Distal basal body ring component protein (flaD).